Here is a 131-residue protein sequence, read N- to C-terminus: MSWQTYVDEHLMCEIEGHHLSSAAIVGHDGAVWAQSTAFPQFKPEEMTNIIKDFDEPGFLAPIGLFLGPTKYMVIQGEPGAVIRGKKGSGGITVKKTGQALVIGIYDEPMTPGQCNMVVERLGDYLVKQGL.

Cys13 and Cys115 are disulfide-bonded. The Involved in PIP2 interaction motif lies at 81-97 (AVIRGKKGSGGITVKKT). Thr111 bears the Phosphothreonine mark.

This sequence belongs to the profilin family. Occurs in many kinds of cells as a complex with monomeric actin in a 1:1 ratio. In terms of processing, phosphorylated by MAP kinases.

The protein localises to the cytoplasm. Its subcellular location is the cytoskeleton. In terms of biological role, binds to actin and affects the structure of the cytoskeleton. At high concentrations, profilin prevents the polymerization of actin, whereas it enhances it at low concentrations. The polypeptide is Profilin-6 (Zea mays (Maize)).